The chain runs to 954 residues: Alpha-xylosidase BoGH31A (954 aa).

Positions 1-20 (MIMNMKNIFYCLLPGLLLGA) are cleaved as a signal peptide. Residue C21 is the site of N-palmitoyl cysteine attachment. The S-diacylglycerol cysteine moiety is linked to residue C21. The region spanning 227 to 366 (TGQEGALTGT…NPEEQGKQSW (140 aa)) is the PA14 domain. Residues D553 and E556 contribute to the active site. Residue D630 is the Proton donor of the active site.

The protein belongs to the glycosyl hydrolase 31 family.

The protein resides in the cell inner membrane. It carries out the reaction Hydrolysis of terminal, non-reducing alpha-D-xylose residues with release of alpha-D-xylose.. The protein operates within glucan metabolism; xyloglucan degradation. In terms of biological role, catalyzes the liberation of alpha-xylose from the non-reducing terminal glucose of xyloglucan oligosaccharides in xyloglucan degradation, converting the 'X' to 'G' units. In Bacteroides ovatus (strain ATCC 8483 / DSM 1896 / JCM 5824 / BCRC 10623 / CCUG 4943 / NCTC 11153), this protein is Alpha-xylosidase BoGH31A.